Here is a 585-residue protein sequence, read N- to C-terminus: Arginine--tRNA ligase (585 aa).

Positions 126 to 136 (PNIAKEMHVGH) match the 'HIGH' region motif.

The protein belongs to the class-I aminoacyl-tRNA synthetase family. In terms of assembly, monomer.

Its subcellular location is the cytoplasm. It catalyses the reaction tRNA(Arg) + L-arginine + ATP = L-arginyl-tRNA(Arg) + AMP + diphosphate. The chain is Arginine--tRNA ligase from Picosynechococcus sp. (strain ATCC 27264 / PCC 7002 / PR-6) (Agmenellum quadruplicatum).